A 183-amino-acid polypeptide reads, in one-letter code: Apo-citrate lyase phosphoribosyl-dephospho-CoA transferase (183 aa).

The protein belongs to the CitX family.

The enzyme catalyses apo-[citrate lyase ACP] + 2'-(5''-triphospho-alpha-D-ribosyl)-3'-dephospho-CoA = holo-[citrate lyase ACP] + diphosphate. Functionally, transfers 2-(5''-triphosphoribosyl)-3'-dephosphocoenzyme-A on a serine residue to the apo-acyl carrier protein (gamma chain) of the citrate lyase to yield holo-acyl carrier protein. The chain is Apo-citrate lyase phosphoribosyl-dephospho-CoA transferase from Escherichia coli O45:K1 (strain S88 / ExPEC).